We begin with the raw amino-acid sequence, 308 residues long: Cytochrome c biogenesis protein CcsA (308 aa).

7 helical membrane-spanning segments follow: residues 17-37 (IISI…VGLC), 43-63 (GMIT…IYSG), 70-90 (LYES…VPYF), 142-162 (MLLS…LLVI), 213-233 (VIGL…VWAN), 246-260 (ETWA…AIYL), and 274-294 (AIVA…VNLL).

Belongs to the CcmF/CycK/Ccl1/NrfE/CcsA family. As to quaternary structure, may interact with Ccs1.

Its subcellular location is the plastid. The protein localises to the chloroplast thylakoid membrane. In terms of biological role, required during biogenesis of c-type cytochromes (cytochrome c6 and cytochrome f) at the step of heme attachment. This is Cytochrome c biogenesis protein CcsA from Nymphaea alba (White water-lily).